The primary structure comprises 147 residues: Cytochrome c-type biogenesis protein CcmE (147 aa).

At 1–9 (MKNLKKQRR) the chain is on the cytoplasmic side. A helical; Signal-anchor for type II membrane protein membrane pass occupies residues 10 to 30 (IQVIALATVALVLSTALIGYA). At 31 to 147 (MRDGINFFRA…EQGVYKGTEG (117 aa)) the chain is on the periplasmic side. The heme site is built by H123 and Y127.

This sequence belongs to the CcmE/CycJ family.

Its subcellular location is the cell inner membrane. Its function is as follows. Heme chaperone required for the biogenesis of c-type cytochromes. Transiently binds heme delivered by CcmC and transfers the heme to apo-cytochromes in a process facilitated by CcmF and CcmH. In Roseobacter denitrificans (strain ATCC 33942 / OCh 114) (Erythrobacter sp. (strain OCh 114)), this protein is Cytochrome c-type biogenesis protein CcmE.